The following is a 469-amino-acid chain: Sulfate adenylyltransferase subunit 1 (469 aa).

The tr-type G domain maps to K22–R238. The interval G31 to S38 is G1. G31–S38 serves as a coordination point for GTP. A G2 region spans residues G89 to D93. The tract at residues D110–G113 is G3. GTP is bound by residues D110 to H114 and N165 to D168. The tract at residues N165–D168 is G4. The tract at residues S203–L205 is G5.

This sequence belongs to the TRAFAC class translation factor GTPase superfamily. Classic translation factor GTPase family. CysN/NodQ subfamily. Heterodimer composed of CysD, the smaller subunit, and CysN.

It carries out the reaction sulfate + ATP + H(+) = adenosine 5'-phosphosulfate + diphosphate. It functions in the pathway sulfur metabolism; hydrogen sulfide biosynthesis; sulfite from sulfate: step 1/3. Its function is as follows. With CysD forms the ATP sulfurylase (ATPS) that catalyzes the adenylation of sulfate producing adenosine 5'-phosphosulfate (APS) and diphosphate, the first enzymatic step in sulfur assimilation pathway. APS synthesis involves the formation of a high-energy phosphoric-sulfuric acid anhydride bond driven by GTP hydrolysis by CysN coupled to ATP hydrolysis by CysD. The protein is Sulfate adenylyltransferase subunit 1 of Aliarcobacter butzleri (strain RM4018) (Arcobacter butzleri).